The sequence spans 112 residues: PTS system lactose-specific EIIA component (112 aa).

The 99-residue stretch at 6 to 104 (EEISMVGFAL…TRYMIRMFKR (99 aa)) folds into the PTS EIIA type-3 domain. Residue His-80 is the Tele-phosphohistidine intermediate of the active site. His-80 is subject to Phosphohistidine; by HPr. Asp-83 lines the Mg(2+) pocket.

As to quaternary structure, homotrimer. Mg(2+) is required as a cofactor.

It localises to the cytoplasm. Its function is as follows. The phosphoenolpyruvate-dependent sugar phosphotransferase system (sugar PTS), a major carbohydrate active transport system, catalyzes the phosphorylation of incoming sugar substrates concomitantly with their translocation across the cell membrane. The enzyme II LacEF PTS system is involved in lactose transport. The sequence is that of PTS system lactose-specific EIIA component from Lacticaseibacillus casei (Lactobacillus casei).